The following is a 362-amino-acid chain: Putative integrase ORF3 (362 aa).

The Integrase catalytic domain occupies 179–359 (YEVKEIGLLQ…TPFNFLNSLS (181 aa)). Residues Asp190 and Asp256 each contribute to the Mg(2+) site.

The protein belongs to the plectrovirus integrase ORF3 family.

Its function is as follows. This protein may encode an integrase, which is necessary for integration of the viral DNA into host genome. The protein is Putative integrase ORF3 of Spiroplasma melliferum (SpV1).